We begin with the raw amino-acid sequence, 258 residues long: DNA repair protein RecO (258 aa).

Belongs to the RecO family.

Functionally, involved in DNA repair and RecF pathway recombination. The sequence is that of DNA repair protein RecO from Oceanobacillus iheyensis (strain DSM 14371 / CIP 107618 / JCM 11309 / KCTC 3954 / HTE831).